The primary structure comprises 164 residues: S-ribosylhomocysteine lyase (164 aa).

Residues His54, His58, and Cys128 each coordinate Fe cation.

It belongs to the LuxS family. In terms of assembly, homodimer. It depends on Fe cation as a cofactor.

The enzyme catalyses S-(5-deoxy-D-ribos-5-yl)-L-homocysteine = (S)-4,5-dihydroxypentane-2,3-dione + L-homocysteine. Functionally, involved in the synthesis of autoinducer 2 (AI-2) which is secreted by bacteria and is used to communicate both the cell density and the metabolic potential of the environment. The regulation of gene expression in response to changes in cell density is called quorum sensing. Catalyzes the transformation of S-ribosylhomocysteine (RHC) to homocysteine (HC) and 4,5-dihydroxy-2,3-pentadione (DPD). The protein is S-ribosylhomocysteine lyase of Campylobacter jejuni subsp. doylei (strain ATCC BAA-1458 / RM4099 / 269.97).